The primary structure comprises 283 residues: Coiled-coil domain-containing protein 42 homolog (283 aa).

Coiled coils occupy residues A31–Y139 and Q174–S204.

The protein belongs to the CFAP73 family.

The polypeptide is Coiled-coil domain-containing protein 42 homolog (Monosiga brevicollis (Choanoflagellate)).